Here is a 534-residue protein sequence, read N- to C-terminus: MADTACLALRLLAALREEEARAVEELLRLGADPNLVLDDGAAAVHLAARASHPRALHCLRMLLRWGADPNARSAEGLTPVHVAAAWGCCGALELLLSRGGDPTLRDQDGLRPLDWALQQRHHNCARVLQELDTPTQPDETREPTETFHVAQGSFETETCQGPALAESSGVSQDSELHVHRAELEVEAVEVAVHPQSSEATENSDYSSDASFVTAVEDSLQPGRPGGALELVAGLWVTRGAVSAGKGAPNCQPQVLTLTARDTDKPVLPGDGDLGALHPHSSVPPMSDLQLLQALRALGYSPGPVTPFTRGHYLRRLQEAQASRADVGHSQELAEALRTGTIPDCQVDEEALAQCFQRLDPLKKWREGITKSSFTYLLLDPRLTKDLPARASSLTLAECLQCFVRAIFYVGKGTRARPDAHLWEAFGYHDQPRKQVCPKVRRILDIWASGRGIISLHCFQHVVAMEAYTREACLLDALGLQTLTNQKQGHYYGVVAHWPPSRRRRLGVHLLQRALLVFLAEGERELRPQDIQARG.

ANK repeat units lie at residues 4 to 35, 39 to 71, 75 to 104, and 108 to 137; these read TACLALRLLAALREEEARAVEELLRLGADPNL, DGAAAVHLAARASHPRALHCLRMLLRWGADPNA, EGLTPVHVAAAWGCCGALELLLSRGGDPTL, and DGLRPLDWALQQRHHNCARVLQELDTPTQP. The 45-residue stretch at 279-323 folds into the LEM domain; that stretch reads HSSVPPMSDLQLLQALRALGYSPGPVTPFTRGHYLRRLQEAQASR. Residues 370 to 485 form the GIY-YIG domain; it reads KSSFTYLLLD…ALGLQTLTNQ (116 aa). The Nuclear localization signal motif lies at 498 to 505; that stretch reads PPSRRRRL.

Interacts (via LEM domain) with BANF1; the interaction may favor BANF1 dimerization. In terms of tissue distribution, predominantly expressed in bone marrow, spleen, thymus, colon and ovary. Expressed also to a lesser extent in lymph nodes, liver and testis.

Its subcellular location is the cytoplasm. The protein localises to the nucleus. In terms of biological role, endonuclease that probably plays a role in the DNA damage response and DNA repair. The sequence is that of Ankyrin repeat and LEM domain-containing protein 1 from Mus musculus (Mouse).